A 392-amino-acid polypeptide reads, in one-letter code: ABSCISIC ACID-INSENSITIVE 5-like protein 4 (392 aa).

The tract at residues 1–22 (MGTHIDINNLGGDTSRGNESKP) is disordered. Ser-28, Ser-50, and Ser-96 each carry phosphoserine. Thr-135 is modified (phosphothreonine). The disordered stretch occupies residues 266–297 (NMGGAGGTVTATSPGTSSAENNTWSSPVPYVF). Polar residues predominate over residues 274 to 291 (VTATSPGTSSAENNTWSS). The bZIP domain occupies 311-374 (VERRQKRMIK…NSELKEFSKQ (64 aa)). A basic motif region spans residues 313 to 332 (RRQKRMIKNRESAARSRARK). Residues 339–360 (LEAEIESLKLVNQDLQKKQAEI) form a leucine-zipper region.

This sequence belongs to the bZIP family. ABI5 subfamily. In terms of assembly, DNA-binding heterodimer. Interacts with ABI3 and the AFP proteins AFP1, AFP2, AFP3 and AFP4. Phosphorylated by CPK4, CPK11, SRK2D and SRK2I in vitro.

The protein localises to the nucleus. Functionally, binds to the ABA-responsive element (ABRE). Could participate in abscisic acid-regulated gene expression. The protein is ABSCISIC ACID-INSENSITIVE 5-like protein 4 (ABF1) of Arabidopsis thaliana (Mouse-ear cress).